A 330-amino-acid polypeptide reads, in one-letter code: Global transcription regulator sge1 (330 aa).

Disordered stretches follow at residues 93–123 (PPGE…RNSV) and 239–306 (QYAP…HQPQ). A compositionally biased stretch (polar residues) spans 105–114 (GKSTTQSGGI). Residues 250–306 (QQPALQQQPQQQPQPQHQPQLQYQPQPHQHQPQLQYQPQQQHQPQQQYRPQPQHQPQ) show a composition bias toward low complexity.

The protein belongs to the MIT1/WOR1 family.

Its subcellular location is the nucleus. Its function is as follows. Global transcriptional regulator of pathogenicity. Acts as an activator of parasitic growth. Not essential for colonization or penetration of the root surface, but required for expression of genes encoding effectors that are secreted during infection. Involved in conidiogenesis, but is not required for conidial fitness, overall (colony) morphology, vegetative growth or carbon source utilization. The sequence is that of Global transcription regulator sge1 from Fusarium oxysporum f. sp. lycopersici (strain 4287 / CBS 123668 / FGSC 9935 / NRRL 34936) (Fusarium vascular wilt of tomato).